Reading from the N-terminus, the 125-residue chain is MLWQGESIRKVTGGRRRPAQGKRRFEIGLAPADTHIGEDRSKLVRTTGGNTKIRSMRAQFANVTNLANGETKKVKIENVEENGANPNYVRRNLLTKGAIIRTEIGRARIMSRPGQDGIINAVLLA.

The segment at 1–20 (MLWQGESIRKVTGGRRRPAQ) is disordered.

The protein belongs to the eukaryotic ribosomal protein eS8 family. As to quaternary structure, part of the 30S ribosomal subunit.

This is Small ribosomal subunit protein eS8 from Methanoregula boonei (strain DSM 21154 / JCM 14090 / 6A8).